The sequence spans 778 residues: DNA repair protein crb2 (778 aa).

A disordered region spans residues 35-56; sequence KVNASINPSPPRSNDNSNKEFS. A Phosphothreonine; by ATM modification is found at threonine 73. A Phosphoserine; by ATM modification is found at serine 80. Residues 141–245 are interaction with rad4; the sequence is VSNSSQILSP…PPAFLPETSE (105 aa). Threonine 187 carries the post-translational modification Phosphothreonine. Threonine 215 carries the phosphothreonine; by cdc2 modification. The residue at position 235 (threonine 235) is a Phosphothreonine. The tract at residues 358 to 493 is tudor-like; it reads SRRSFKNRVL…RRFQGRDLSF (136 aa). An interaction with dimethylated histone H4 region spans residues 370 to 404; sequence FKGYPSFYYPATLVAPVHSAVTSSIMYKVQFDDAT. The BRCT domain maps to 535–653; that stretch reads SNQLIFDDCV…RVVDFSPYLL (119 aa).

As to quaternary structure, homodimer. Dimerization is mediated via the BRCT domain. Interacts (via BRCT domain) with rad3. Interacts with rad4 (via BRCT1,2 domains); a single rad4 molecule interacts simultaneously with both Thr-187 phosphorylation sites in a crb2 dimer. Interacts (via Tudor domain) with histone H4K20me2. Interacts (via BRCT dmain) with histone H2AS128ph (gamma-H2A). Interacts with chk1. Interacts with sad1. Phosphorylation of Thr-73 and Ser-80 by rad3/ATM promotes interaction with chk1. Phosphorylation at Thr-187 is dependent on phosphorylation at Thr-215 and Thr-235. Phosphorylation at Thr-215 and Thr-235 may prime the non-canonical Thr-187 site for cdc2/CDK phosphorylation.

It is found in the nucleus. Functionally, essential for cell cycle arrest at the G1 and G2 stages following DNA damage by X-, and UV-irradiation, or inactivation of DNA ligase. Plays a role in the response to DNA damage. Interaction with rad4 via its phosphorylation sites in the N-terminus couples the DNA checkpoint apparatus to chromatin via interaction of its C-terminal BRCT domains with epigenetic modifications on histones H4 and H2A, respectively, in the G1/S phase of the cell cycle, and facilitates recruitment of the checkpoint kinase chk1. The sequence is that of DNA repair protein crb2 from Schizosaccharomyces pombe (strain 972 / ATCC 24843) (Fission yeast).